The primary structure comprises 383 residues: UDP-D-xylose:L-fucose alpha-1,3-D-xylosyltransferase 3 (383 aa).

Residues 1-20 (MAQQSQRPISNRHISLLNRN) lie on the Cytoplasmic side of the membrane. Residues 21-41 (GLILLLLLALFVILGVFLPLT) traverse the membrane as a helical; Signal-anchor for type II membrane protein segment. At 42–383 (KSSLFMFPNT…KNRGKKHKLP (342 aa)) the chain is on the lumenal side. Asparagine 50, asparagine 82, and asparagine 157 each carry an N-linked (GlcNAc...) asparagine glycan. Positions 180 to 182 (DVD) match the DXD motif motif. N-linked (GlcNAc...) asparagine glycosylation is found at asparagine 212, asparagine 258, asparagine 301, asparagine 306, asparagine 357, and asparagine 364.

This sequence belongs to the glycosyltransferase 77 family. Requires Mn(2+) as cofactor. Mg(2+) is required as a cofactor. Post-translationally, glycosylated. As to expression, expressed around trichome support cells in the adaxial epidermis of rosette leaves, in cauline leaves, petals and both the proximal and distal ends of siliques.

It is found in the golgi apparatus membrane. Catalyzes the transfer of D-xylose from UDP-alpha-D-xylose onto L-fucose. Probably involved in the biosynthesis of rhamnogalacturonan II (RG-II) through xylosylation of the internal fucose moiety of the A-chain of RG-II, a structurally complex pectic polysaccharide of the primary cell wall. RG-II is essential for the cell wall integrity of rapidly growing tissues such as roots and pollen tube growth and elongation. The polypeptide is UDP-D-xylose:L-fucose alpha-1,3-D-xylosyltransferase 3 (Arabidopsis thaliana (Mouse-ear cress)).